A 233-amino-acid polypeptide reads, in one-letter code: Orotidine 5'-phosphate decarboxylase (233 aa).

Substrate-binding positions include D12, K34, 61 to 70 (DWKLHDIGAT), T116, R181, Q190, G210, and R211. K63 acts as the Proton donor in catalysis.

It belongs to the OMP decarboxylase family. Type 1 subfamily. Homodimer.

The catalysed reaction is orotidine 5'-phosphate + H(+) = UMP + CO2. It participates in pyrimidine metabolism; UMP biosynthesis via de novo pathway; UMP from orotate: step 2/2. In terms of biological role, catalyzes the decarboxylation of orotidine 5'-monophosphate (OMP) to uridine 5'-monophosphate (UMP). The protein is Orotidine 5'-phosphate decarboxylase of Caulobacter vibrioides (strain ATCC 19089 / CIP 103742 / CB 15) (Caulobacter crescentus).